The primary structure comprises 347 residues: Dual specificity mitogen-activated protein kinase kinase 3 (347 aa).

At Met1 the chain carries N-acetylmethionine. The span at 1 to 15 (MESPASSQPASMPQS) shows a compositional bias: low complexity. The segment at 1–46 (MESPASSQPASMPQSKGKSKRKKDLRISCMSKPPAPNPTPPRNLDS) is disordered. Ser3 and Ser15 each carry phosphoserine. The region spanning 64–325 (LVTISELGRG…YLELMEHPFF (262 aa)) is the Protein kinase domain. ATP is bound by residues 70–78 (LGRGAYGVV) and Lys93. Catalysis depends on Asp190, which acts as the Proton acceptor. Ser218 carries the phosphoserine modification. The residue at position 222 (Thr222) is a Phosphothreonine.

It belongs to the protein kinase superfamily. STE Ser/Thr protein kinase family. MAP kinase kinase subfamily. In terms of assembly, component of a signaling complex containing at least AKAP13, PKN1, MAPK14, ZAK and MAP2K3. Within this complex, AKAP13 interacts directly with PKN1, which in turn recruits MAPK14, MAP2K3 and ZAK. Binds to DYRK1B/MIRK and increases its kinase activity. Part of a complex with MAP3K3, RAC1 and CCM2. Interacts with ARRB1. (Microbial infection) Interacts with Yersinia YopJ. In terms of processing, autophosphorylated. Phosphorylation on Ser-218 and Thr-222 by MAP kinase kinase kinases positively regulates the kinase activity. Phosphorylated by TAOK2. Post-translationally, (Microbial infection) Yersinia YopJ may acetylate Ser/Thr residues, preventing phosphorylation and activation, thus blocking the MAPK signaling pathway. In terms of tissue distribution, abundant expression is seen in the skeletal muscle. It is also widely expressed in other tissues.

The enzyme catalyses L-seryl-[protein] + ATP = O-phospho-L-seryl-[protein] + ADP + H(+). It carries out the reaction L-threonyl-[protein] + ATP = O-phospho-L-threonyl-[protein] + ADP + H(+). The catalysed reaction is L-tyrosyl-[protein] + ATP = O-phospho-L-tyrosyl-[protein] + ADP + H(+). Activated by dual phosphorylation on Ser-218 and Thr-222. Dual specificity kinase. Is activated by cytokines and environmental stress in vivo. Catalyzes the concomitant phosphorylation of a threonine and a tyrosine residue in the MAP kinase p38. Part of a signaling cascade that begins with the activation of the adrenergic receptor ADRA1B and leads to the activation of MAPK14. This chain is Dual specificity mitogen-activated protein kinase kinase 3 (MAP2K3), found in Homo sapiens (Human).